The primary structure comprises 251 residues: Insulin-induced gene 1 protein (251 aa).

Residues 1 to 58 lie on the Cytoplasmic side of the membrane; sequence MQTLEEHCWSCSCTRGRDKKGTKVSAWLARRVGKAMSSLNSLLSLAYSTLASSEGRSL. The chain crosses the membrane as a helical span at residues 59 to 81; the sequence is IQRSLVLFTVGVFLALVLNLLQI. The Extracellular portion of the chain corresponds to 82–100; it reads QRNVTLFPEEVIATIFSSA. Residues 101-118 traverse the membrane as a helical segment; it reads WWVPPCCGTAAAVVGLLY. Over 119-133 the chain is Cytoplasmic; it reads PCIDSRIGEPHKFKR. The chain crosses the membrane as a helical span at residues 134 to 156; that stretch reads EWASVMRCIAVFVGINHASAKLD. At 157-159 the chain is on the extracellular side; that stretch reads FAN. The chain crosses the membrane as a helical span at residues 160–178; it reads NVQLSLTLAALSLGLWWTF. Over 179–183 the chain is Cytoplasmic; sequence DRSRS. The chain crosses the membrane as a helical span at residues 184 to 205; that stretch reads GLGLGITIAFLATLITQFLVYN. At 206–219 the chain is on the extracellular side; that stretch reads GVYQYTSPDFLYIR. The helical transmembrane segment at 220-237 threads the bilayer; it reads SWLPCIFFSGGVTVGNIG. The Cytoplasmic portion of the chain corresponds to 238–251; that stretch reads RQLAMGSSEKTHGD. The short motif at 245–251 is the KxHxx element; sequence SEKTHGD.

Belongs to the INSIG family. As to quaternary structure, interacts with scap; interaction is direct and only takes place in the presence of sterols; it prevents interaction between scap and the coat protein complex II (COPII). Associates with the SCAP-SREBP complex; association is mediated via its interaction with scap and only takes place in the presence of sterols.

It localises to the endoplasmic reticulum membrane. In terms of biological role, oxysterol-binding protein that mediates feedback control of cholesterol synthesis by controlling both endoplasmic reticulum to Golgi transport of scap and degradation of hmgcr. Acts as a negative regulator of cholesterol biosynthesis by mediating the retention of the SCAP-SREBP complex in the endoplasmic reticulum, thereby blocking the processing of sterol regulatory element-binding proteins (SREBPs). Binds oxysterol, including 25-hydroxycholesterol, regulating interaction with scap and retention of the SCAP-SREBP complex in the endoplasmic reticulum. In presence of oxysterol, interacts with scap, retaining the SCAP-SREBP complex in the endoplasmic reticulum, thereby preventing scap from escorting SREBPs to the Golgi. Sterol deprivation reduces oxysterol-binding, disrupting the interaction between insig1 and scap, thereby promoting Golgi transport of the SCAP-SREBP complex, followed by processing and nuclear translocation of SREBPs. Also regulates cholesterol synthesis by regulating degradation of hmgcr. In Xenopus laevis (African clawed frog), this protein is Insulin-induced gene 1 protein.